Reading from the N-terminus, the 361-residue chain is Feruloyl CoA ortho-hydroxylase 1 (361 aa).

Residues 204–312 (TKESLFMGSI…RISVPIFVNP (109 aa)) form the Fe2OG dioxygenase domain. Tyr220 contributes to the 2-oxoglutarate binding site. Residues His235, Asp237, and His293 each contribute to the Fe cation site. Positions 303 and 305 each coordinate 2-oxoglutarate.

This sequence belongs to the iron/ascorbate-dependent oxidoreductase family. L-ascorbate serves as cofactor. The cofactor is Fe(2+). In terms of tissue distribution, highly expressed in roots, especially in the cortex.

It carries out the reaction (E)-feruloyl-CoA + 2-oxoglutarate + O2 = (E)-6-hydroxyferuloyl-CoA + succinate + CO2. The catalysed reaction is (E)-6-hydroxyferuloyl-CoA = scopoletin + CoA. Its pathway is phenylpropanoid metabolism. In terms of biological role, 2-oxoglutarate (OG)- and Fe(II)-dependent dioxygenase (2OGD) involved in scopoletin biosynthesis. Converts feruloyl CoA into 6'-hydroxyferuloyl CoA but has no activity with ferulic acid, feruloylquinic acid, caffeic acid, caffeoyl CoA, p-coumaric acid, cinnamic acid, cinnamoyl CoA or benzoyl CoA. Required for the production and secretion of compounds (e.g. fluorescent coumarins) that facilitate the mobilization and uptake of iron from sources with low bioavailability or in high pH-induced iron deficiency conditions. Involved in the pathway of sideretin biosynthesis from feruloyl CoA, a redox-active catecholic metabolite exuded by roots in response to iron deficiency in order to facilitate the uptake of iron; this pathway consists in the successive conversion from feruloyl CoA to scopoletin, from scopoletin to fraxetin and from fraxetin to sideretin. Catalyzes the biosynthesis of scopoletin from feruloyl CoA. In Arabidopsis thaliana (Mouse-ear cress), this protein is Feruloyl CoA ortho-hydroxylase 1.